Reading from the N-terminus, the 610-residue chain is Probable methyltransferase PMT22 (610 aa).

The Cytoplasmic portion of the chain corresponds to Met1–Lys10. The helical; Signal-anchor for type II membrane protein transmembrane segment at Leu11 to Asn31 threads the bilayer. Residues Asp32–Pro610 are Lumenal-facing. The span at Ser56 to Pro69 shows a compositional bias: low complexity. A disordered region spans residues Ser56–Asp81. N-linked (GlcNAc...) asparagine glycans are attached at residues Asn64, Asn75, Asn100, Asn400, Asn469, and Asn546.

The protein belongs to the methyltransferase superfamily.

It localises to the endoplasmic reticulum membrane. The polypeptide is Probable methyltransferase PMT22 (Arabidopsis thaliana (Mouse-ear cress)).